A 369-amino-acid chain; its full sequence is Integrator complex assembly factor WDR73 (369 aa).

3 WD repeats span residues 74-114 (FIDE…RDVI), 266-306 (AASE…SAMK), and 326-366 (GREP…VHDG).

Belongs to the WD repeat WDR73 family.

The protein resides in the cytoplasm. It is found in the cytoskeleton. The protein localises to the spindle. It localises to the spindle pole. Its subcellular location is the cleavage furrow. Functionally, component of a multiprotein complex required for the assembly of the RNA endonuclease module of the integrator complex. Associates with ints9 and ints11 in the cytoplasm, stabilizing the ints9-ints11 heterodimer and blocking the active site of ints11. Brat1 then joins the complex and plugs the active site of ints11, leading to wdr73 release and nuclear import of ints9 and ints11. The polypeptide is Integrator complex assembly factor WDR73 (wdr73) (Xenopus laevis (African clawed frog)).